The following is a 205-amino-acid chain: Octanoyltransferase (205 aa).

The BPL/LPL catalytic domain occupies 30–205; it reads NSSDELVWLL…ILKKEFYKIF (176 aa). Substrate contacts are provided by residues 68 to 75, 140 to 142, and 153 to 155; these read RGGKYTYH, AFG, and GIA. The active-site Acyl-thioester intermediate is Cys-171.

It belongs to the LipB family.

It is found in the cytoplasm. It carries out the reaction octanoyl-[ACP] + L-lysyl-[protein] = N(6)-octanoyl-L-lysyl-[protein] + holo-[ACP] + H(+). It functions in the pathway protein modification; protein lipoylation via endogenous pathway; protein N(6)-(lipoyl)lysine from octanoyl-[acyl-carrier-protein]: step 1/2. Its function is as follows. Catalyzes the transfer of endogenously produced octanoic acid from octanoyl-acyl-carrier-protein onto the lipoyl domains of lipoate-dependent enzymes. Lipoyl-ACP can also act as a substrate although octanoyl-ACP is likely to be the physiological substrate. The protein is Octanoyltransferase of Wolbachia sp. subsp. Brugia malayi (strain TRS).